A 621-amino-acid chain; its full sequence is F-box/LRR-repeat protein 4 (621 aa).

R28 is modified (asymmetric dimethylarginine). The F-box domain occupies 277–332 (NGYFDKLPYELIQLILNHLTLPDLCRLAQTCKLLNQHCCDPLQYIHLNLQPYWAKL). 9 LRR repeats span residues 376–397 (ELVR…EIIS), 402–421 (NLQD…AFSH), 427–448 (GLKR…SILN), 452–474 (DLQH…ASMI), 480–501 (KLRT…AELA), 504–524 (CPLL…STGC), 532–558 (LPNL…ASNC), 559–583 (TRLR…LLES), and 584–609 (CKDL…LSAS).

In terms of assembly, part of a SCF (SKP1-CUL1-F-box) protein ligase complex. Interacts with FAF2 and VCP. Interacts with PPTC7; this interaction promotes destruction of BNIP3 and NIX and mitophagy suppression.

It localises to the cytoplasm. It is found in the nucleus. The protein localises to the mitochondrion outer membrane. In terms of biological role, substrate-recognition component of the mitochondria-localized SCF-FBXL4 ubiquitin E3 ligase complex that plays a role in the restriction of mitophagy by controlling the degradation of BNIP3 and NIX mitophagy receptors. Also rescues mitochondrial injury through reverting hyperactivation of DRP1-mediated mitochondrial fission. This chain is F-box/LRR-repeat protein 4 (FBXL4), found in Bos taurus (Bovine).